The chain runs to 804 residues: Cyclic di-GMP-binding protein (804 aa).

Positions 1–18 (MKMVSLIALLVFATGAQA) are cleaved as a signal peptide. At 19 to 766 (APIASKAPAH…DWYMHNHPFR (748 aa)) the chain is on the periplasmic side. A disordered region spans residues 24–69 (KAPAHQPTGSDLPPLPAAAPVAPAAQPSAQAVDPASAAPASDAGSA). The chain crosses the membrane as a helical span at residues 767–787 (VIVVGLVGCLLVVAVLVRALF). Topologically, residues 788–804 (RHAMFRRRQLQEERQKS) are cytoplasmic.

Belongs to the AcsB/BcsB family. As to quaternary structure, tightly associated with the cellulose synthase catalytic subunit.

The protein localises to the cell inner membrane. Its pathway is glycan metabolism; bacterial cellulose biosynthesis. In terms of biological role, binds the cellulose synthase activator, bis-(3'-5') cyclic diguanylic acid (c-di-GMP). This is Cyclic di-GMP-binding protein (bcsBI) from Komagataeibacter xylinus (Gluconacetobacter xylinus).